The following is a 387-amino-acid chain: ATP phosphoribosyltransferase regulatory subunit (387 aa).

It belongs to the class-II aminoacyl-tRNA synthetase family. HisZ subfamily. Heteromultimer composed of HisG and HisZ subunits.

The protein localises to the cytoplasm. It functions in the pathway amino-acid biosynthesis; L-histidine biosynthesis; L-histidine from 5-phospho-alpha-D-ribose 1-diphosphate: step 1/9. In terms of biological role, required for the first step of histidine biosynthesis. May allow the feedback regulation of ATP phosphoribosyltransferase activity by histidine. The polypeptide is ATP phosphoribosyltransferase regulatory subunit (Ralstonia pickettii (strain 12J)).